Reading from the N-terminus, the 579-residue chain is Folliculin (579 aa).

Residues 31-82 (QGAGSGDSPDQVEQAEEEEGGIQMSSRVRAHSPAEGASSESSSPGPKKSDMC) are disordered. 2 positions are modified to phosphoserine: Ser-62 and Ser-73. Positions 63 to 76 (PAEGASSESSSPGP) are enriched in low complexity. Residues 86–242 (RSLAVGHPGY…RNGNAARSLT (157 aa)) form the uDENN FLCN/SMCR8-type domain. The stretch at 287–310 (EKLADLEEESESWDNSEAEEEEKA) forms a coiled coil. A compositionally biased stretch (acidic residues) spans 294–308 (EESESWDNSEAEEEE). Positions 294–323 (EESESWDNSEAEEEEKAPVTPEGAEGRELT) are disordered. Phosphoserine occurs at positions 302, 406, 537, 542, and 571. Positions 339 to 491 (QPPKLTGFKS…ILNKIEAALT (153 aa)) constitute a cDENN FLCN/SMCR8-type domain. Residues 493 to 558 (QNLSVDVVDQ…LLKFWMTGLS (66 aa)) form the dDENN FLCN/SMCR8-type domain.

Belongs to the folliculin family. As to quaternary structure, interacts (via C-terminus) with FNIP1 or FNIP2 (via C-terminus). Component of the lysosomal folliculin complex (LFC), composed of FLCN, FNIP1 (or FNIP2), RagA/RRAGA or RagB/RRAGB GDP-bound, RagC/RRAGC or RagD/RRAGD GTP-bound, and Ragulator. Interaction with FNIP1 or FNIP2 mediates indirect interaction with the PRKAA1, PRKAB1 and PRKAG1 subunits of 5'-AMP-activated protein kinase (AMPK). Interacts with HSP90AA1 in the presence of FNIP1. Interacts with HSP70, STUB1, CDC37, AHSA1, CCT2, STIP1, PTGES3 and PPP5C. Interacts with GABARAP; interaction takes place in the presence of FNIP1 and/or FNIP2. Interacts with RILP; the interaction is direct and promotes association between RILP and RAB34. Interacts with KIF3A and KIF3B. Interacts with lactate dehydrogenase LDHA, but not LDHB; the interaction is direct, may preferentially bind LDHA dimers rather than tetramers, and regulates LDHA activity, acting as an uncompetitive inhibitor. Post-translationally, phosphorylation by ULK1 modulates the interaction with GABARAP and is required to regulate autophagy. Highly expressed in adult heart, pancreas, and prostate with moderate expression in adult brain, kidney, liver, adipose tissue and lung.

The protein resides in the lysosome membrane. The protein localises to the cytoplasm. It localises to the cytosol. Its subcellular location is the cell projection. It is found in the cilium. The protein resides in the cytoskeleton. The protein localises to the microtubule organizing center. It localises to the centrosome. Its subcellular location is the spindle. It is found in the nucleus. GTPase-activating activity is inhibited in the folliculin complex (LFC), which stabilizes the GDP-bound state of RagA/RRAGA (or RagB/RRAGB), because Arg-164 is located far from the RagC/RRAGC or RagD/RRAGD nucleotide pocket. Disassembly of the LFC complex upon amino acid restimulation liberates the GTPase-activating activity. Multi-functional protein, involved in both the cellular response to amino acid availability and in the regulation of glycolysis. GTPase-activating protein that plays a key role in the cellular response to amino acid availability through regulation of the non-canonical mTORC1 signaling cascade controlling the MiT/TFE factors TFEB and TFE3. Activates mTORC1 by acting as a GTPase-activating protein: specifically stimulates GTP hydrolysis by RagC/RRAGC or RagD/RRAGD, promoting the conversion to the GDP-bound state of RagC/RRAGC or RagD/RRAGD, and thereby activating the kinase activity of mTORC1. The GTPase-activating activity is inhibited during starvation and activated in presence of nutrients. Acts as a key component for non-canonical mTORC1-dependent control of the MiT/TFE factors TFEB and TFE3, while it is not involved in mTORC1-dependent phosphorylation of canonical RPS6KB1/S6K1 and EIF4EBP1/4E-BP1. In low-amino acid conditions, the lysosomal folliculin complex (LFC) is formed on the membrane of lysosomes, which inhibits the GTPase-activating activity of FLCN, inactivates mTORC1 and maximizes nuclear translocation of TFEB and TFE3. Upon amino acid restimulation, RagA/RRAGA (or RagB/RRAGB) nucleotide exchange promotes disassembly of the LFC complex and liberates the GTPase-activating activity of FLCN, leading to activation of mTORC1 and subsequent cytoplasmic retention of TFEB and TFE3. Indirectly acts as a positive regulator of Wnt signaling by promoting mTOR-dependent cytoplasmic retention of MiT/TFE factor TFE3. Required for the exit of hematopoietic stem cell from pluripotency by promoting mTOR-dependent cytoplasmic retention of TFE3, thereby increasing Wnt signaling. Involved in the control of embryonic stem cells differentiation; together with LAMTOR1 it is necessary to recruit and activate RagC/RRAGC and RagD/RRAGD at the lysosomes, and to induce exit of embryonic stem cells from pluripotency via non-canonical, mTOR-independent TFE3 inactivation. Acts as an inhibitor of browning of adipose tissue by regulating mTOR-dependent cytoplasmic retention of TFE3. In response to flow stress, regulates STK11/LKB1 accumulation and mTORC1 activation through primary cilia: may act by recruiting STK11/LKB1 to primary cilia for activation of AMPK resided at basal bodies, causing mTORC1 down-regulation. Together with FNIP1 and/or FNIP2, regulates autophagy: following phosphorylation by ULK1, interacts with GABARAP and promotes autophagy. Required for starvation-induced perinuclear clustering of lysosomes by promoting association of RILP with its effector RAB34. Regulates glycolysis by binding to lactate dehydrogenase LDHA, acting as an uncompetitive inhibitor. The chain is Folliculin from Mus musculus (Mouse).